The primary structure comprises 479 residues: FAD-dependent monooxygenase atmM (479 aa).

Residues 10-30 (IIVGGSVAGLTLAHCLQRAGI) traverse the membrane as a helical segment. Positions 36, 50, 109, 309, and 322 each coordinate FAD. The chain crosses the membrane as a helical span at residues 445 to 465 (WILVLLVIVVSFGLHSPELVI).

Belongs to the paxM FAD-dependent monooxygenase family. It depends on FAD as a cofactor.

The protein localises to the membrane. The protein operates within secondary metabolite biosynthesis. FAD-dependent monooxygenase; part of the ATM1 gene cluster that mediates the biosynthesis of aflatrem, a tremorgenic mycotoxin with acute neurotoxic effects. Synthesis of geranylgeranyl diphosphate (GGPP) by AtmG (a GGPP synthase) precedes condensation of GGPP with indole 3-glycerol phosphate, followed by epoxidation and cyclization by AtmM (a FAD-dependent monooxygenase) and AtmC (a prenyltransferase) to produce paspaline. AtmB is also essential for paspaline production, but its exact role has not been identified yet. AtmP, a cytochrome P450 monooxygenase, subsequently converts paspaline to 13-desoxypaxilline via PC-M6 by removal of the C-30 methyl group and oxidation at C-10. AtmQ, a cytochrome P450 monooxygenase, then catalyzes the oxidation of 13-desoxypaxilline, first at C-7 to produce paspalicine and then at C-13 to form paspalinine. Finally, AtmD prenylates paspalinine to form aflatrem. The polypeptide is FAD-dependent monooxygenase atmM (Aspergillus flavus).